The chain runs to 121 residues: Large ribosomal subunit protein bL12 (121 aa).

It belongs to the bacterial ribosomal protein bL12 family. In terms of assembly, homodimer. Part of the ribosomal stalk of the 50S ribosomal subunit. Forms a multimeric L10(L12)X complex, where L10 forms an elongated spine to which 2 to 4 L12 dimers bind in a sequential fashion. Binds GTP-bound translation factors.

Its function is as follows. Forms part of the ribosomal stalk which helps the ribosome interact with GTP-bound translation factors. Is thus essential for accurate translation. The chain is Large ribosomal subunit protein bL12 from Shewanella piezotolerans (strain WP3 / JCM 13877).